We begin with the raw amino-acid sequence, 261 residues long: Kallikrein 1-related peptidase b3 (261 aa).

Positions 1–18 (MWFLILFLALSLGGIDAA) are cleaved as a signal peptide. Positions 19–24 (PPVQSR) are cleaved as a propeptide — activation peptide. Residues 25 to 107 (IVGGFKCEKN…HPGFNMSLMR (83 aa)) form a segment B1 region. One can recognise a Peptidase S1 domain in the interval 25–258 (IVGGFKCEKN…FTSWIKDTMA (234 aa)). Intrachain disulfides connect Cys-31–Cys-173, Cys-50–Cys-66, Cys-152–Cys-219, Cys-184–Cys-198, and Cys-209–Cys-234. The active-site Charge relay system is His-65. An N-linked (GlcNAc...) asparagine glycan is attached at Asn-102. A segment C region spans residues 112–164 (FLEYDYSNDLMLLRLSKPADITDTVKPITLPTEEPKLGSTCLASGWGSITPTK). The interval 112 to 261 (FLEYDYSNDL…WIKDTMAKNP (150 aa)) is segment A. Residue Asp-120 is the Charge relay system of the active site. The tract at residues 165 to 261 (FQFTDDLYCV…WIKDTMAKNP (97 aa)) is segment B2. The Charge relay system role is filled by Ser-213. His-231 and Glu-236 together coordinate Zn(2+).

It belongs to the peptidase S1 family. Kallikrein subfamily. In terms of assembly, 7S nerve growth factor is composed of two alpha chains, a beta dimer composed of identical chains, and two gamma chains. The cofactor is Zn(2+).

The enzyme catalyses Preferential cleavage of Arg-|-Xaa bonds in small molecule substrates. Highly selective action to release kallidin (lysyl-bradykinin) from kininogen involves hydrolysis of Met-|-Xaa or Leu-|-Xaa.. Its function is as follows. 7S NGF alpha chain stabilizes the 7S complex. The beta dimer promotes neurite growth. The gamma chain is an arginine-specific protease; it may also have plasminogen activator activity, as well as mitogenic activity for chick embryo fibroblasts. This Mus musculus (Mouse) protein is Kallikrein 1-related peptidase b3 (Klk1b3).